A 376-amino-acid polypeptide reads, in one-letter code: Chaperone protein DnaJ (376 aa).

A J domain is found at 5–69; it reads DYYEVLGISK…QKRAQYDQYG (65 aa). The CR-type zinc-finger motif lies at 133–215; the sequence is GKDAEIEIPR…CHGKGRVTKT (83 aa). Residues Cys-146, Cys-149, Cys-163, Cys-166, Cys-189, Cys-192, Cys-203, and Cys-206 each coordinate Zn(2+). 4 CXXCXGXG motif repeats span residues 146 to 153, 163 to 170, 189 to 196, and 203 to 210; these read CDTCHGSG, CSHCGGKG, CQYCNGTG, and CPTCHGKG.

The protein belongs to the DnaJ family. In terms of assembly, homodimer. Requires Zn(2+) as cofactor.

Its subcellular location is the cytoplasm. Participates actively in the response to hyperosmotic and heat shock by preventing the aggregation of stress-denatured proteins and by disaggregating proteins, also in an autonomous, DnaK-independent fashion. Unfolded proteins bind initially to DnaJ; upon interaction with the DnaJ-bound protein, DnaK hydrolyzes its bound ATP, resulting in the formation of a stable complex. GrpE releases ADP from DnaK; ATP binding to DnaK triggers the release of the substrate protein, thus completing the reaction cycle. Several rounds of ATP-dependent interactions between DnaJ, DnaK and GrpE are required for fully efficient folding. Also involved, together with DnaK and GrpE, in the DNA replication of plasmids through activation of initiation proteins. This Listeria monocytogenes serotype 4a (strain HCC23) protein is Chaperone protein DnaJ.